The sequence spans 383 residues: MTRAVALTGRLTFRPGQVPGIAGERPQLAERLLRGRPGEAAPHLLPRLFALCGEAHGVTAALAVNAALGRVAAPEPALFRRLAHETACEHIRRIWLDWPLHLASGPVPSTFNSRVPQRELIDCPMLKASHSESAAMLAWLERAVLGTAPRRWLAHWHEDPAGCLSTWATKIHTWPAMAMRQCMQVAQAMASMPAPLLPHASTDALRELAQSLAGEADFPCRPSWQGRVFETGSWTRLGLADCSAFGNMWLRLGARIAELVLLSLRDGMQASGEAHDSPCLQMGALALAPGQALAWSEMARGLLMHWVRLVDTPQGPVIGGYRIIAPTEWNFHPDGAVAHMLAHLAPFDAADVRRSIGILVAAYDPCVPYTVEFAESLGDTVHA.

In Cupriavidus necator (strain ATCC 17699 / DSM 428 / KCTC 22496 / NCIMB 10442 / H16 / Stanier 337) (Ralstonia eutropha), this protein is Hydrogenase expression/formation protein HoxV (hoxV).